Consider the following 178-residue polypeptide: Thymidine kinase (178 aa).

13–20 (GPMFAGKS) provides a ligand contact to ATP. The Proton acceptor role is filled by glutamate 85. Residue phenylalanine 115 participates in substrate binding. Zn(2+)-binding residues include cysteine 140 and cysteine 143. 159-163 (IEVIG) lines the substrate pocket. Residues cysteine 172 and cysteine 175 each coordinate Zn(2+).

It belongs to the thymidine kinase family.

It carries out the reaction thymidine + ATP = dTMP + ADP + H(+). This chain is Thymidine kinase (TK), found in Oryctolagus cuniculus (Rabbit).